We begin with the raw amino-acid sequence, 226 residues long: MLTWLTRDSLTFPPLEKALHDPNGLLAAGGDLTPERLVAAYRHGCFPWYQDGQPILWWSPDPRTVLFPEELHISRSLAKFIRQGHYQVSFDSDFPAVIEACAAPRDYADGTWITDSMRAAYCELHRRGFAHSVEVRREGELVGGLYGLAMGRLFFGESMFSRADNASKVGFVALVEHLKQAGFVLIDCQMPTNHLHSLGARAISRAEFADHLARHLDQPSGASWVR.

It belongs to the L/F-transferase family.

Its subcellular location is the cytoplasm. It catalyses the reaction N-terminal L-lysyl-[protein] + L-leucyl-tRNA(Leu) = N-terminal L-leucyl-L-lysyl-[protein] + tRNA(Leu) + H(+). The catalysed reaction is N-terminal L-arginyl-[protein] + L-leucyl-tRNA(Leu) = N-terminal L-leucyl-L-arginyl-[protein] + tRNA(Leu) + H(+). The enzyme catalyses L-phenylalanyl-tRNA(Phe) + an N-terminal L-alpha-aminoacyl-[protein] = an N-terminal L-phenylalanyl-L-alpha-aminoacyl-[protein] + tRNA(Phe). In terms of biological role, functions in the N-end rule pathway of protein degradation where it conjugates Leu, Phe and, less efficiently, Met from aminoacyl-tRNAs to the N-termini of proteins containing an N-terminal arginine or lysine. The sequence is that of Leucyl/phenylalanyl-tRNA--protein transferase from Pseudomonas entomophila (strain L48).